Here is a 312-residue protein sequence, read N- to C-terminus: Glyoxylate/hydroxypyruvate reductase A (312 aa).

Arg227 is a catalytic residue. Residue His275 is the Proton donor of the active site.

Belongs to the D-isomer specific 2-hydroxyacid dehydrogenase family. GhrA subfamily.

It localises to the cytoplasm. The enzyme catalyses glycolate + NADP(+) = glyoxylate + NADPH + H(+). The catalysed reaction is (R)-glycerate + NAD(+) = 3-hydroxypyruvate + NADH + H(+). It carries out the reaction (R)-glycerate + NADP(+) = 3-hydroxypyruvate + NADPH + H(+). Its function is as follows. Catalyzes the NADPH-dependent reduction of glyoxylate and hydroxypyruvate into glycolate and glycerate, respectively. Inactive towards 2-oxo-D-gluconate, 2-oxoglutarate, oxaloacetate and pyruvate. Only D- and L-glycerate are involved in the oxidative activity with NADP. Activity with NAD is very low. The sequence is that of Glyoxylate/hydroxypyruvate reductase A (ghrA) from Escherichia coli (strain K12).